The chain runs to 624 residues: Chaperone protein HtpG (624 aa).

Residues 1 to 336 form an a; substrate-binding region; sequence MKGQETRGFQ…SNDLPLNVSR (336 aa). Residues 337–552 are b; sequence EILQDSTVTR…ADEMSTQMAK (216 aa). A c region spans residues 553–624; it reads LFAAAGQSVP…IRRMNQLLVS (72 aa).

The protein belongs to the heat shock protein 90 family. Homodimer.

It localises to the cytoplasm. Functionally, molecular chaperone. Has ATPase activity. The polypeptide is Chaperone protein HtpG (Salmonella choleraesuis (strain SC-B67)).